A 412-amino-acid polypeptide reads, in one-letter code: Transcription termination factor 3, mitochondrial (412 aa).

A mitochondrion-targeting transit peptide spans 1–67 (MALLAQQLPR…IKTYRTLFWN (67 aa)).

This sequence belongs to the mTERF family.

The protein localises to the mitochondrion. In terms of biological role, binds promoter DNA and regulates initiation of transcription. Required for normal mitochondrial transcription and translation, and for normal assembly of mitochondrial respiratory complexes. Required for normal mitochondrial function. Maintains 16S rRNA levels and functions in mitochondrial ribosome assembly by regulating the biogenesis of the 39S ribosomal subunit. This is Transcription termination factor 3, mitochondrial (Mterf3) from Mus musculus (Mouse).